We begin with the raw amino-acid sequence, 182 residues long: uncharacterized protein (182 aa).

This is an uncharacterized protein from Haemophilus influenzae (strain ATCC 51907 / DSM 11121 / KW20 / Rd).